A 512-amino-acid polypeptide reads, in one-letter code: Bifunctional purine biosynthesis protein PurH (512 aa).

The MGS-like domain occupies 1 to 144; that stretch reads MKRALVSVSD…KNYRDVVVVV (144 aa).

Belongs to the PurH family.

The catalysed reaction is (6R)-10-formyltetrahydrofolate + 5-amino-1-(5-phospho-beta-D-ribosyl)imidazole-4-carboxamide = 5-formamido-1-(5-phospho-D-ribosyl)imidazole-4-carboxamide + (6S)-5,6,7,8-tetrahydrofolate. The enzyme catalyses IMP + H2O = 5-formamido-1-(5-phospho-D-ribosyl)imidazole-4-carboxamide. Its pathway is purine metabolism; IMP biosynthesis via de novo pathway; 5-formamido-1-(5-phospho-D-ribosyl)imidazole-4-carboxamide from 5-amino-1-(5-phospho-D-ribosyl)imidazole-4-carboxamide (10-formyl THF route): step 1/1. It functions in the pathway purine metabolism; IMP biosynthesis via de novo pathway; IMP from 5-formamido-1-(5-phospho-D-ribosyl)imidazole-4-carboxamide: step 1/1. The polypeptide is Bifunctional purine biosynthesis protein PurH (Ligilactobacillus salivarius (strain UCC118) (Lactobacillus salivarius)).